A 259-amino-acid chain; its full sequence is Ubiquitin-conjugating enzyme E2 J2 (259 aa).

Topologically, residues 1–226 (MSNNSNKRAP…AGLPQANRHH (226 aa)) are cytoplasmic. Residues 12–162 (TATQRLKQDY…DKVFCELFPE (151 aa)) form the UBC core domain. Cys-94 serves as the catalytic Glycyl thioester intermediate. Residues 227–247 (GLLGGALANLFVIVGFAAFAY) traverse the membrane as a helical; Anchor for type IV membrane protein segment. At 248–259 (TVKYVLRSIAQE) the chain is on the lumenal side.

It belongs to the ubiquitin-conjugating enzyme family. Interacts with murid herpesvirus 4 protein K3 (mK3).

Its subcellular location is the endoplasmic reticulum membrane. The catalysed reaction is S-ubiquitinyl-[E1 ubiquitin-activating enzyme]-L-cysteine + [E2 ubiquitin-conjugating enzyme]-L-cysteine = [E1 ubiquitin-activating enzyme]-L-cysteine + S-ubiquitinyl-[E2 ubiquitin-conjugating enzyme]-L-cysteine.. Its pathway is protein modification; protein ubiquitination. In terms of biological role, catalyzes the covalent attachment of ubiquitin to other proteins. Seems to function in the selective degradation of misfolded membrane proteins from the endoplasmic reticulum (ERAD). In cooperation with the GATOR2 complex, catalyzes 'Lys-6'-linked ubiquitination of NPRL2. Its function is as follows. In case of infection by the murid herpesvirus 4, its association with the viral E3 ligase K3 mediates ubiquitination of host surface class I (MHC-I) H-2D(b)/H2-D1 and H-2K(b)/H2-K1 molecules before they exit the endoplasmic reticulum, leading to their degradation by the ERAD system, thus blocking the immune detection of virus-infected cells. The complex formed with the murid herpesvirus 4 protein K3 mediates ubiquitination of lysine, as well as serine and threonine residues present in the cytoplasmic tail of surface class I molecules and promotes ubiquitination of hydroxylated serine or threonine residues via ester bonds instead of the classical isopeptide linkage. The chain is Ubiquitin-conjugating enzyme E2 J2 (Ube2j2) from Mus musculus (Mouse).